The chain runs to 96 residues: Citrate lyase acyl carrier protein (96 aa).

At Ser14 the chain carries O-(phosphoribosyl dephospho-coenzyme A)serine.

It belongs to the CitD family. As to quaternary structure, oligomer with a subunit composition of (alpha,beta,gamma)6.

It localises to the cytoplasm. Covalent carrier of the coenzyme of citrate lyase. The polypeptide is Citrate lyase acyl carrier protein (Lactiplantibacillus plantarum (strain ATCC BAA-793 / NCIMB 8826 / WCFS1) (Lactobacillus plantarum)).